We begin with the raw amino-acid sequence, 1073 residues long: Pleckstrin homology domain-containing family G member 5 (1073 aa).

Disordered stretches follow at residues 1–28 (MGTG…SQLL), 91–135 (VSTR…ARRR), 217–261 (PGDE…ESSL), 278–309 (GEAG…GINE), and 367–388 (SWEE…RLED). Composition is skewed to basic and acidic residues over residues 217–231 (PGDE…KDSK) and 249–260 (ERVDPQSRRESS). The segment covering 367–381 (SWEEEEEDDEEDEES) has biased composition (acidic residues). Positions 406-598 (HQQEAVWELL…ERFIHHVNTC (193 aa)) constitute a DH domain. One can recognise a PH domain in the interval 654 to 754 (QLLLEGSLRM…WVDTIYNAQN (101 aa)). Disordered stretches follow at residues 762–818 (QLSA…TSDG), 833–873 (TLSS…GPVD), and 899–925 (PVVE…TPVQ). The span at 777-790 (LEEEEDEQEEEGEE) shows a compositional bias: acidic residues. Composition is skewed to polar residues over residues 791-809 (SGTS…SNSL) and 844-864 (VSSQ…TPTS). Residue T793 is modified to Phosphothreonine. The residue at position 798 (S798) is a Phosphoserine. Residues 900-915 (VVEPAPVPQTPSPQPS) show a composition bias toward pro residues. Position 909 is a phosphothreonine (T909). S911, S936, and S941 each carry phosphoserine. Residues 993–1046 (MCDPCHGPQLSESENRPSHMTGGPADSARRRCREMPSGTMSRVQSEPPSGVSAQ) form a disordered region. Over residues 1030-1039 (GTMSRVQSEP) the composition is skewed to polar residues.

As to quaternary structure, interacts with GIPC1/synectin and RHOA. Expressed in neurons and glial cells of the peripheral nervous system, with highest levels of expression in the brain and sciatic nerve endoneurium. Isoform 2 is expressed at detectable levels only in malignant cells.

The protein localises to the cytoplasm. It localises to the perinuclear region. It is found in the cell membrane. The protein resides in the cell junction. Its subcellular location is the cell projection. The protein localises to the lamellipodium. Functionally, functions as a guanine exchange factor (GEF) for RAB26 and thus regulates autophagy of synaptic vesicles in axon terminal of motoneurons. Involved in the control of neuronal cell differentiation. Plays a role in angiogenesis through regulation of endothelial cells chemotaxis. Also affects the migration, adhesion, and matrix/bone degradation in macrophages and osteoclasts. The polypeptide is Pleckstrin homology domain-containing family G member 5 (Plekhg5) (Mus musculus (Mouse)).